The chain runs to 366 residues: Chorismate synthase (366 aa).

Arginine 48 and arginine 54 together coordinate NADP(+). Residues arginine 129–serine 131, asparagine 241–alanine 242, glycine 290, lysine 305–serine 309, and arginine 331 contribute to the FMN site.

This sequence belongs to the chorismate synthase family. In terms of assembly, homotetramer. FMNH2 is required as a cofactor.

It carries out the reaction 5-O-(1-carboxyvinyl)-3-phosphoshikimate = chorismate + phosphate. The protein operates within metabolic intermediate biosynthesis; chorismate biosynthesis; chorismate from D-erythrose 4-phosphate and phosphoenolpyruvate: step 7/7. Catalyzes the anti-1,4-elimination of the C-3 phosphate and the C-6 proR hydrogen from 5-enolpyruvylshikimate-3-phosphate (EPSP) to yield chorismate, which is the branch point compound that serves as the starting substrate for the three terminal pathways of aromatic amino acid biosynthesis. This reaction introduces a second double bond into the aromatic ring system. The chain is Chorismate synthase from Nitrobacter hamburgensis (strain DSM 10229 / NCIMB 13809 / X14).